A 310-amino-acid polypeptide reads, in one-letter code: 5'-adenylylsulfate reductase-like 4 (310 aa).

An N-terminal signal peptide occupies residues 1–22 (MEKEILLLLLVIMFLTVADVDA). Positions 49–168 (GVESDERPRF…LVAFYSDVTG (120 aa)) constitute a Thioredoxin domain. Asn-143 and Asn-190 each carry an N-linked (GlcNAc...) asparagine glycan. Residues 217–237 (LAIVFVLLRLLHLIYPTLVVF) form a helical membrane-spanning segment.

The protein resides in the membrane. The polypeptide is 5'-adenylylsulfate reductase-like 4 (APRL4) (Arabidopsis thaliana (Mouse-ear cress)).